The sequence spans 467 residues: Cysteine--tRNA ligase (467 aa).

Position 29 (cysteine 29) interacts with Zn(2+). Positions 31–41 match the 'HIGH' region motif; that stretch reads PTVYDDSHLGH. The tract at residues 155–174 is disordered; that stretch reads KLSGRGEDLEQVSRIESSEE. Over residues 158–174 the composition is skewed to basic and acidic residues; sequence GRGEDLEQVSRIESSEE. Cysteine 210, histidine 239, and glutamate 243 together coordinate Zn(2+). The 'KMSKS' region signature appears at 271-275; sequence KMSKS. Lysine 274 provides a ligand contact to ATP.

Belongs to the class-I aminoacyl-tRNA synthetase family. Monomer. Zn(2+) is required as a cofactor.

It is found in the cytoplasm. It catalyses the reaction tRNA(Cys) + L-cysteine + ATP = L-cysteinyl-tRNA(Cys) + AMP + diphosphate. This is Cysteine--tRNA ligase from Wolinella succinogenes (strain ATCC 29543 / DSM 1740 / CCUG 13145 / JCM 31913 / LMG 7466 / NCTC 11488 / FDC 602W) (Vibrio succinogenes).